A 246-amino-acid polypeptide reads, in one-letter code: tRNA (guanine-N(1)-)-methyltransferase (246 aa).

S-adenosyl-L-methionine is bound by residues glycine 117 and 137–142; that span reads IGDYVL.

It belongs to the RNA methyltransferase TrmD family. Homodimer.

Its subcellular location is the cytoplasm. The enzyme catalyses guanosine(37) in tRNA + S-adenosyl-L-methionine = N(1)-methylguanosine(37) in tRNA + S-adenosyl-L-homocysteine + H(+). Its function is as follows. Specifically methylates guanosine-37 in various tRNAs. This Acinetobacter baumannii (strain SDF) protein is tRNA (guanine-N(1)-)-methyltransferase.